The sequence spans 201 residues: Pyridoxal 5'-phosphate synthase subunit PdxT (201 aa).

L-glutamine is bound at residue 50–52 (GES). The active-site Nucleophile is Cys82. Residues Arg115 and 143–144 (IR) contribute to the L-glutamine site. Catalysis depends on charge relay system residues His179 and Glu181.

The protein belongs to the glutaminase PdxT/SNO family. In the presence of PdxS, forms a dodecamer of heterodimers. Only shows activity in the heterodimer.

It catalyses the reaction aldehydo-D-ribose 5-phosphate + D-glyceraldehyde 3-phosphate + L-glutamine = pyridoxal 5'-phosphate + L-glutamate + phosphate + 3 H2O + H(+). The enzyme catalyses L-glutamine + H2O = L-glutamate + NH4(+). The protein operates within cofactor biosynthesis; pyridoxal 5'-phosphate biosynthesis. In terms of biological role, catalyzes the hydrolysis of glutamine to glutamate and ammonia as part of the biosynthesis of pyridoxal 5'-phosphate. The resulting ammonia molecule is channeled to the active site of PdxS. The sequence is that of Pyridoxal 5'-phosphate synthase subunit PdxT from Deinococcus geothermalis (strain DSM 11300 / CIP 105573 / AG-3a).